The sequence spans 228 residues: Geranylgeranylglyceryl phosphate synthase (228 aa).

Lys-11 is a sn-glycerol 1-phosphate binding site. Mg(2+) is bound by residues Asp-13 and Thr-39. Sn-glycerol 1-phosphate contacts are provided by residues 159 to 164 (YIEYSG), Gly-189, and 209 to 210 (GN).

It belongs to the GGGP/HepGP synthase family. Group I subfamily. Mg(2+) serves as cofactor.

The protein resides in the cytoplasm. It catalyses the reaction sn-glycerol 1-phosphate + (2E,6E,10E)-geranylgeranyl diphosphate = sn-3-O-(geranylgeranyl)glycerol 1-phosphate + diphosphate. Its pathway is membrane lipid metabolism; glycerophospholipid metabolism. Prenyltransferase that catalyzes the transfer of the geranylgeranyl moiety of geranylgeranyl diphosphate (GGPP) to the C3 hydroxyl of sn-glycerol-1-phosphate (G1P). This reaction is the first ether-bond-formation step in the biosynthesis of archaeal membrane lipids. In Methanoregula boonei (strain DSM 21154 / JCM 14090 / 6A8), this protein is Geranylgeranylglyceryl phosphate synthase.